A 409-amino-acid chain; its full sequence is CUB domain-containing protein (409 aa).

The signal sequence occupies residues 1–18 (MFLFSLTVLSALVLITES). A compositionally biased stretch (low complexity) spans 154-229 (TEASTTAQET…TTAPTTAPAP (76 aa)). The segment at 154–230 (TEASTTAQET…TAPTTAPAPI (77 aa)) is disordered. An intrachain disulfide couples Cys232 to Cys257. Positions 232-338 (CGGVLRGRGT…QEYVDYYYYD (107 aa)) constitute a CUB domain. The segment at 389-409 (VQGAADSESEASASSESSDED) is disordered. Residues 392–409 (AADSESEASASSESSDED) are compositionally biased toward low complexity.

Component of the acid-insoluble and acid-soluble organic matrix of the aragonitic skeleton (at protein level).

It localises to the secreted. The chain is CUB domain-containing protein from Acropora millepora (Staghorn coral).